The primary structure comprises 203 residues: NADH-quinone oxidoreductase subunit C (203 aa).

The protein belongs to the complex I 30 kDa subunit family. In terms of assembly, NDH-1 is composed of 14 different subunits. Subunits NuoB, C, D, E, F, and G constitute the peripheral sector of the complex.

Its subcellular location is the cell inner membrane. It catalyses the reaction a quinone + NADH + 5 H(+)(in) = a quinol + NAD(+) + 4 H(+)(out). NDH-1 shuttles electrons from NADH, via FMN and iron-sulfur (Fe-S) centers, to quinones in the respiratory chain. The immediate electron acceptor for the enzyme in this species is believed to be ubiquinone. Couples the redox reaction to proton translocation (for every two electrons transferred, four hydrogen ions are translocated across the cytoplasmic membrane), and thus conserves the redox energy in a proton gradient. The chain is NADH-quinone oxidoreductase subunit C from Bartonella tribocorum (strain CIP 105476 / IBS 506).